A 249-amino-acid chain; its full sequence is ATP synthase subunit a, chloroplastic (249 aa).

A run of 5 helical transmembrane segments spans residues Gln40–Ile60, Val97–Leu117, Ile136–Ser156, Leu201–Leu221, and Gly222–Gly242.

The protein belongs to the ATPase A chain family. In terms of assembly, F-type ATPases have 2 components, CF(1) - the catalytic core - and CF(0) - the membrane proton channel. CF(1) has five subunits: alpha(3), beta(3), gamma(1), delta(1), epsilon(1). CF(0) has four main subunits: a, b, b' and c.

It localises to the plastid. It is found in the chloroplast thylakoid membrane. Its function is as follows. Key component of the proton channel; it plays a direct role in the translocation of protons across the membrane. The polypeptide is ATP synthase subunit a, chloroplastic (Nasturtium officinale (Watercress)).